The chain runs to 495 residues: Anaerobic nitric oxide reductase flavorubredoxin (495 aa).

The zinc metallo-hydrolase stretch occupies residues 30–210; it reads HKGTSYNSYL…PFSPLVTAKI (181 aa). Positions 79, 81, 83, 147, 166, and 227 each coordinate Fe cation. Residues 254–393 enclose the Flavodoxin-like domain; that stretch reads ITLFYDSMSN…ECREHGRQLA (140 aa). Residues 260-264 and 342-369 contribute to the FMN site; these read SMSNN and AFGSYGWTGGAVDRIQTRLMDAGFDISI. One can recognise a Rubredoxin-like domain in the interval 438–489; the sequence is DQAMLCTVCQWVYDPAQGEPDQLVAPGTPWAQVPDSFLCPGCGIGKEVFEPC. Residues Cys443, Cys446, Cys476, and Cys479 each coordinate Fe cation.

This sequence in the N-terminal section; belongs to the zinc metallo-hydrolase group 3 family. In terms of assembly, homotetramer. It depends on Fe cation as a cofactor. FMN serves as cofactor.

It localises to the cytoplasm. It functions in the pathway nitrogen metabolism; nitric oxide reduction. Functionally, anaerobic nitric oxide reductase; uses NADH to detoxify nitric oxide (NO), protecting several 4Fe-4S NO-sensitive enzymes. Has at least 2 reductase partners, only one of which (NorW, flavorubredoxin reductase) has been identified. NO probably binds to the di-iron center; electrons enter from the NorW at rubredoxin and are transferred sequentially to the FMN center and the di-iron center. Also able to function as an aerobic oxygen reductase. In Aeromonas hydrophila subsp. hydrophila (strain ATCC 7966 / DSM 30187 / BCRC 13018 / CCUG 14551 / JCM 1027 / KCTC 2358 / NCIMB 9240 / NCTC 8049), this protein is Anaerobic nitric oxide reductase flavorubredoxin.